Reading from the N-terminus, the 509-residue chain is Activin receptor type-1 (509 aa).

Residues 1 to 20 (MVDGVMILPVLIMIALPSPS) form the signal peptide. Topologically, residues 21-123 (MEDEKPKVNP…FPGTQNFHLE (103 aa)) are extracellular. Asn-102 carries N-linked (GlcNAc...) asparagine glycosylation. A helical transmembrane segment spans residues 124–146 (VGLIILSVVFAVCLLACLLGVAL). The Cytoplasmic portion of the chain corresponds to 147–509 (RKFKRRNQER…NSLDKLKTDC (363 aa)). The 30-residue stretch at 178 to 207 (STLADLLDHSCTSGSGSGLPFLVQRTVARQ) folds into the GS domain. One can recognise a Protein kinase domain in the interval 208–502 (ITLLECVGKG…KTLTKIDNSL (295 aa)). Residues 214–222 (VGKGRYGEV) and Lys-235 contribute to the ATP site. Asp-336 functions as the Proton acceptor in the catalytic mechanism. Ser-501 is subject to Phosphoserine.

It belongs to the protein kinase superfamily. TKL Ser/Thr protein kinase family. TGFB receptor subfamily. As to quaternary structure, interacts with FKBP1A. Interacts with FCHO1. Interacts with CLU. Interacts with type II receptors AMHR2 and ACVR2A. Interacts with BMP7. Interacts with GDF2/BMP9. Interacts with BMP6 (when glycosylated); the interaction may induce HAMP expression. Interacts with TSC22D1/TSC-22. Mg(2+) serves as cofactor. It depends on Mn(2+) as a cofactor. Expressed in normal parenchymal cells, endothelial cells, fibroblasts and tumor-derived epithelial cells.

Its subcellular location is the membrane. The catalysed reaction is L-threonyl-[receptor-protein] + ATP = O-phospho-L-threonyl-[receptor-protein] + ADP + H(+). It catalyses the reaction L-seryl-[receptor-protein] + ATP = O-phospho-L-seryl-[receptor-protein] + ADP + H(+). In terms of biological role, bone morphogenetic protein (BMP) type I receptor that is involved in a wide variety of biological processes, including bone, heart, cartilage, nervous, and reproductive system development and regulation. As a type I receptor, forms heterotetrameric receptor complexes with the type II receptors AMHR2, ACVR2A or ACVR2B. Upon binding of ligands such as BMP7 or GDF2/BMP9 to the heteromeric complexes, type II receptors transphosphorylate ACVR1 intracellular domain. In turn, ACVR1 kinase domain is activated and subsequently phosphorylates SMAD1/5/8 proteins that transduce the signal. In addition to its role in mediating BMP pathway-specific signaling, suppresses TGFbeta/activin pathway signaling by interfering with the binding of activin to its type II receptor. Besides canonical SMAD signaling, can activate non-canonical pathways such as p38 mitogen-activated protein kinases/MAPKs. May promote the expression of HAMP, potentially via its interaction with BMP6. This chain is Activin receptor type-1 (ACVR1), found in Homo sapiens (Human).